The following is a 1649-amino-acid chain: DNA-directed RNA polymerase subunit beta' (1649 aa).

Zn(2+) contacts are provided by Cys-63, Cys-65, Cys-78, and Cys-81. Residues Asp-747, Asp-749, and Asp-751 each coordinate Mg(2+). Zn(2+)-binding residues include Cys-1078, Cys-1269, Cys-1276, and Cys-1279.

It belongs to the RNA polymerase beta' chain family. In terms of assembly, the RNAP catalytic core consists of 2 alpha, 1 beta, 1 beta' and 1 omega subunit. When a sigma factor is associated with the core the holoenzyme is formed, which can initiate transcription. Requires Mg(2+) as cofactor. It depends on Zn(2+) as a cofactor.

It catalyses the reaction RNA(n) + a ribonucleoside 5'-triphosphate = RNA(n+1) + diphosphate. Functionally, DNA-dependent RNA polymerase catalyzes the transcription of DNA into RNA using the four ribonucleoside triphosphates as substrates. In Thermosipho melanesiensis (strain DSM 12029 / CIP 104789 / BI429), this protein is DNA-directed RNA polymerase subunit beta'.